Consider the following 485-residue polypeptide: MSLFDHSVSELHKKLNNKEISVTDLVEESYKRIADVEDNVKAFLTLDEENARAKAKELDAKIGAEDNGLLFGMPIGVKDNIVTNGLRTTCASKILANFDPIYDATVVQKLKAADTITIGKLNMDEFAMGSSNENSGFYATKNPWNLDYVPGGSSGGSAAAVAAGEVLFSLGSDTGGSIRQPAAYCGVVGLKPTYGRVSRYGLVAFASSLDQIGPITRTVEDNAYLLQAISGLDRMDATSANVEVGNYLAGLTGDVKGLRIAVPKEYLGEGVGEEARESVLAALKVLEGMGATWEEVSLPHSKYALATYYLLSSSEASANLSRFDGVRYGVRSDNVNNLMDLYKNTRSEGFGDEVKRRIMLGTFALSSGYYDAYYKKAQQVRTLIKNDFENVFANYDVIIGPTTPTPAFKVGEKVDDPMTMYANDILTIPVNLAGVPAISVPCGFGANNMPLGLQIIGKHFDEATIYRVAHAFEQATDHHTKKASL.

Catalysis depends on charge relay system residues Lys-78 and Ser-153. Ser-177 (acyl-ester intermediate) is an active-site residue.

The protein belongs to the amidase family. GatA subfamily. In terms of assembly, heterotrimer of A, B and C subunits.

It catalyses the reaction L-glutamyl-tRNA(Gln) + L-glutamine + ATP + H2O = L-glutaminyl-tRNA(Gln) + L-glutamate + ADP + phosphate + H(+). In terms of biological role, allows the formation of correctly charged Gln-tRNA(Gln) through the transamidation of misacylated Glu-tRNA(Gln) in organisms which lack glutaminyl-tRNA synthetase. The reaction takes place in the presence of glutamine and ATP through an activated gamma-phospho-Glu-tRNA(Gln). The chain is Glutamyl-tRNA(Gln) amidotransferase subunit A from Bacillus anthracis (strain A0248).